A 548-amino-acid chain; its full sequence is Chaperonin GroEL (548 aa).

ATP-binding positions include 30-33, Lys-51, 87-91, Gly-415, 479-481, and Asp-495; these read TLGP, DGTTT, and NAA.

The protein belongs to the chaperonin (HSP60) family. As to quaternary structure, forms a cylinder of 14 subunits composed of two heptameric rings stacked back-to-back. Interacts with the co-chaperonin GroES.

The protein resides in the cytoplasm. The enzyme catalyses ATP + H2O + a folded polypeptide = ADP + phosphate + an unfolded polypeptide.. In terms of biological role, together with its co-chaperonin GroES, plays an essential role in assisting protein folding. The GroEL-GroES system forms a nano-cage that allows encapsulation of the non-native substrate proteins and provides a physical environment optimized to promote and accelerate protein folding. The chain is Chaperonin GroEL from Ectopseudomonas mendocina (strain ymp) (Pseudomonas mendocina).